The sequence spans 1435 residues: MEIFSQKDYYPTPSSNVISYESDCVSKPVNSADLPALIVHLSSPLEGVDYNASADFFLIYRNFITPQDLHDLLIYRFRWCIREITTNAAKAKRRRIGEVALVRTFVLLRHSILNYFVQDFLPNITLRLRLIEFLNDKHIEQYPKIISSCIINLKKNWVHCSKLVWENIELNEPDKLDFDAWLHYSLKDFTQLESLHKRGSRLSIYARQSFASPDFRNQSVLSLYKTSDVFRLPEKLQSSNSSKNQRSPSMLLFPDNTSNVYSKHRIAKEPSVDNESEDMSDSKQKISHLSKVTLVSTLMKGVDYPSSYAVDKIMPPTPAKKVEFILNSLYIPEDLNEQSGTLQGTSTTSSLDNNSNSNSRSNTSSMSVLHRSAIGLLAKWMKNHNRHDSSNDKKFMSAIKPANQKPEMDAFVKYVVSISSLNRKSSKEEEEEFLNSDSSKFDILSARTIDEVESLLHLQNQLIEKVQTHSNNNRGPTVNVDCERREHIHDIKILQQNSFKPSNDNFSAMDNLDLYQTVSSIAQSVISLTNTLNKQLQNNESNMQPSPSYDALQRRKVKSLTTAYYNKMHGSYSAESMRLFDKDNSSSRTDENGPQRLLFHETDKTNSEAITNMTPRRKNHSQSQKSMTSSPLKNVLPDLKESSPLNDSREDTESITYSYDSELSSSSPPRDTVTKKSRKVRNIVNNTDSPTLKTKTGFLNLREFTFEDTKSLDEKKSTIDGLEKNYDNKENQESEYESTKKLDNSLDASSEANNYDITTRKKHSSCNHKIKQAVVRPASGRISISRVQSIAITPTKELSIVDPEQNKSNSVIEEISEIEPLNLEYNKKSALYSDTSSTVISISTSKLFESAQNSPLKQTQNPQREFPNGTSVSETNRIRLSIAPTIESVVSDLNSITTGSTVETFETSRDLPVPHQRIINLREEYQRGNQDIISNTSSLHELKTIDLSDSNNDLESPSTHAKNNKYFFSPDDGSIDVASPMKNVEELKSKFLKNESETNSNISGSVLTMDDIDINDTSSARNTRRANSESAFTGSLNKKNLNEIANMLDDSINDDPITVALMKLEGTYEKIPEKPENTKSSDAIGIKTSKLADEVEMLNLNNLPSFQNSPAEKRKSLLIERRRQTIMNIPFTPDQSEKEGFTSSSPEKIDVSANVDVAVQAAQIQELIGQYRIHDSRLMISNNESHVPFILMYDSLSVAQQMTLIEKEILGEIDWKDLLDLKMKHEGPQVISWLQLLVRNETLSGIDLAISRFNLTVDWIISEILLTKSSKMKRNVIQRFIHVADHCRTFQNFNTLMEIILALSSSVVQKFTDAWRLIEPGDLLTWEELKKIPSLDRNYSTIRNLLNSVNPLVGCVPFIVVYLSDLSANAEKKDWILEDKVVNYNKFDTNVQIVKNFIQRVQWSKFYTFKVNHELLSKCVYISTLTQEEINELST.

An N-terminal Ras-GEF domain is found at 25–157; that stretch reads VSKPVNSADL…SCIINLKKNW (133 aa). The tract at residues 235-256 is disordered; the sequence is KLQSSNSSKNQRSPSMLLFPDN. Residues 237-249 are compositionally biased toward low complexity; it reads QSSNSSKNQRSPS. Serine 271 carries the phosphoserine modification. Positions 338–365 are disordered; sequence QSGTLQGTSTTSSLDNNSNSNSRSNTSS. At serine 559 the chain carries Phosphoserine. Residues 582 to 606 show a composition bias toward basic and acidic residues; sequence KDNSSSRTDENGPQRLLFHETDKTN. A disordered region spans residues 582-689; sequence KDNSSSRTDE…VRNIVNNTDS (108 aa). Residues 621-632 show a composition bias toward polar residues; sequence SQSQKSMTSSPL. The segment covering 654-667 has biased composition (low complexity); sequence SITYSYDSELSSSS. Position 689 is a phosphoserine (serine 689). Residue threonine 691 is modified to Phosphothreonine. The span at 723–744 shows a compositional bias: basic and acidic residues; it reads EKNYDNKENQESEYESTKKLDN. Residues 723 to 747 form a disordered region; sequence EKNYDNKENQESEYESTKKLDNSLD. Serine 808 and serine 810 each carry phosphoserine. The segment at 851-871 is disordered; sequence AQNSPLKQTQNPQREFPNGTS. Phosphoserine is present on residues serine 1028 and serine 1109. Residues 1194–1434 form the Ras-GEF domain; sequence DSLSVAQQMT…LTQEEINELS (241 aa).

Belongs to the LTE1 family. Interacts with CDC24, CDC42, KEL1, KEL2, RAS2 and TEM1. Post-translationally, phosphorylated by CDC28 in a cell cycle-dependent manner and in response to nocodazole. Dephosphorylion by CDC14 triggers LTE1 release from bud cortex during the exit of mitosis.

Its subcellular location is the cytoplasm. It is found in the bud. In terms of biological role, GDP-GTP exchange factor for TEM1, a Ras-like protein, component of the mitotic exit network (MEN). Activation of TEM1 by LTE1 in the bud ultimately leads to activation of CDC15 followed by the release of CDC14 from the nucleolus, which then inactivates cyclin-dependent kinases (CDKs) activity by several mechanism. Required for TEM1 localization to the bud cortex during mitotic exit. Fine-tunes the timing of the mitotic exit and couples this event with cytokinesis. Functionally, involved in proprotein-processing like proalpha factor-processing in the secretory pathway. The protein is Guanine nucleotide exchange factor LTE1 (LTE1) of Saccharomyces cerevisiae (strain ATCC 204508 / S288c) (Baker's yeast).